Consider the following 281-residue polypeptide: Pantothenate synthetase (281 aa).

30–37 (MGNLHQGH) is an ATP binding site. The Proton donor role is filled by histidine 37. Position 61 (glutamine 61) interacts with (R)-pantoate. Residue glutamine 61 participates in beta-alanine binding. 149–152 (GNKD) contributes to the ATP binding site. Glutamine 155 contacts (R)-pantoate. ATP-binding positions include isoleucine 178 and 186-189 (MSSR).

The protein belongs to the pantothenate synthetase family. In terms of assembly, homodimer.

The protein localises to the cytoplasm. It catalyses the reaction (R)-pantoate + beta-alanine + ATP = (R)-pantothenate + AMP + diphosphate + H(+). It functions in the pathway cofactor biosynthesis; (R)-pantothenate biosynthesis; (R)-pantothenate from (R)-pantoate and beta-alanine: step 1/1. Functionally, catalyzes the condensation of pantoate with beta-alanine in an ATP-dependent reaction via a pantoyl-adenylate intermediate. This chain is Pantothenate synthetase, found in Shewanella baltica (strain OS223).